The chain runs to 404 residues: Multidrug resistance protein MdtG (404 aa).

11 helical membrane-spanning segments follow: residues 19-39 (LGCF…PLYV), 56-76 (LVFS…GGLA), 90-110 (LGMA…QFLI), 113-133 (ALLG…ATQV), 144-164 (TLST…GLLA), 171-191 (PVFF…FFFI), 222-242 (LFVT…ILTL), 254-274 (IAFI…LSAP), 288-308 (ILIV…FVQT), 317-337 (FLLG…LVYN), and 376-396 (AVFC…WNSL).

This sequence belongs to the major facilitator superfamily. DHA1 family. MdtG (TC 2.A.1.2.20) subfamily.

It is found in the cell inner membrane. This chain is Multidrug resistance protein MdtG, found in Salmonella agona (strain SL483).